A 209-amino-acid polypeptide reads, in one-letter code: A-type ATP synthase subunit D (209 aa).

It belongs to the V-ATPase D subunit family. In terms of assembly, has multiple subunits, A(3), B(3), C, D, E, F, G, I and K(x); there may be a few other subunits as well.

It is found in the cell membrane. In terms of biological role, component of the A-type ATP synthase that produces ATP from ADP in the presence of a proton gradient across the membrane. This is A-type ATP synthase subunit D from Methanosarcina mazei (strain ATCC BAA-159 / DSM 3647 / Goe1 / Go1 / JCM 11833 / OCM 88) (Methanosarcina frisia).